The primary structure comprises 110 residues: U32-theraphotoxin-Cg1a (110 aa).

The N-terminal stretch at 1–19 is a signal peptide; that stretch reads MNHCFLILFTLIVFTVVWS. Positions 20-43 are excised as a propeptide; it reads LEENEEYPDEDEMIESFMDGYSYR. 4 disulfide bridges follow: Cys49-Cys63, Cys56-Cys69, Cys60-Cys105, and Cys62-Cys80.

This sequence belongs to the neurotoxin 03 (Tx2) family. 02 subfamily. In terms of tissue distribution, expressed by the venom gland.

It localises to the secreted. Probable ion channel inhibitor. This chain is U32-theraphotoxin-Cg1a, found in Chilobrachys guangxiensis (Chinese earth tiger tarantula).